We begin with the raw amino-acid sequence, 103 residues long: MMSEKFALVLLVACIAFIGIETSPINSDSWKDGFCGENEAYDSMRRGCEERCDDHNPTFCFKFTTVCWCEKGYVRDKSDTCIKVEDCPNVSENLEFSETIIGM.

The N-terminal stretch at 1–22 (MMSEKFALVLLVACIAFIGIET) is a signal peptide. The 53-residue stretch at 35 to 87 (CGENEAYDSMRRGCEERCDDHNPTFCFKFTTVCWCEKGYVRDKSDTCIKVEDC) folds into the TIL domain.

The protein belongs to the polydnaviridae EGF-like motif protein family.

This Microplitis demolitor bracovirus (isolate Webb) (MdBV) protein is Probable protease inhibitor Egf0.4b (O11).